The following is a 732-amino-acid chain: Elongation factor 2 (732 aa).

In terms of domain architecture, tr-type G spans 19–228; the sequence is ELIRNIGIVA…TKITFKDIVE (210 aa). GTP-binding positions include 28-35, 94-98, and 148-151; these read AHIDHGKT, DTPGH, and NKID. His-598 carries the diphthamide modification.

Belongs to the TRAFAC class translation factor GTPase superfamily. Classic translation factor GTPase family. EF-G/EF-2 subfamily.

Its subcellular location is the cytoplasm. In terms of biological role, catalyzes the GTP-dependent ribosomal translocation step during translation elongation. During this step, the ribosome changes from the pre-translocational (PRE) to the post-translocational (POST) state as the newly formed A-site-bound peptidyl-tRNA and P-site-bound deacylated tRNA move to the P and E sites, respectively. Catalyzes the coordinated movement of the two tRNA molecules, the mRNA and conformational changes in the ribosome. This chain is Elongation factor 2 (fusA), found in Thermoplasma acidophilum (strain ATCC 25905 / DSM 1728 / JCM 9062 / NBRC 15155 / AMRC-C165).